Consider the following 610-residue polypeptide: UvrABC system protein C (610 aa).

Positions 19–97 (GAPGVYKMLD…IKRHKPRYNI (79 aa)) constitute a GIY-YIG domain. Residues 207–242 (EALIDRLAQRMEQAAQRLEFEKAARYRDQISNLRTV) form the UVR domain.

Belongs to the UvrC family. As to quaternary structure, interacts with UvrB in an incision complex.

The protein resides in the cytoplasm. In terms of biological role, the UvrABC repair system catalyzes the recognition and processing of DNA lesions. UvrC both incises the 5' and 3' sides of the lesion. The N-terminal half is responsible for the 3' incision and the C-terminal half is responsible for the 5' incision. In Methylococcus capsulatus (strain ATCC 33009 / NCIMB 11132 / Bath), this protein is UvrABC system protein C.